A 382-amino-acid chain; its full sequence is Histidinol-phosphate aminotransferase (382 aa).

Lys-215 carries the post-translational modification N6-(pyridoxal phosphate)lysine. Residues 363–382 (NIDNQSKTHSQTSSIRKGTI) are disordered.

It belongs to the class-II pyridoxal-phosphate-dependent aminotransferase family. Histidinol-phosphate aminotransferase subfamily. In terms of assembly, homodimer. Pyridoxal 5'-phosphate serves as cofactor.

The catalysed reaction is L-histidinol phosphate + 2-oxoglutarate = 3-(imidazol-4-yl)-2-oxopropyl phosphate + L-glutamate. It functions in the pathway amino-acid biosynthesis; L-histidine biosynthesis; L-histidine from 5-phospho-alpha-D-ribose 1-diphosphate: step 7/9. In Yersinia pseudotuberculosis serotype O:3 (strain YPIII), this protein is Histidinol-phosphate aminotransferase.